Consider the following 604-residue polypeptide: Elongation factor 4 (604 aa).

The region spanning S7–S189 is the tr-type G domain. Residues D19–T24 and N136–D139 contribute to the GTP site.

The protein belongs to the TRAFAC class translation factor GTPase superfamily. Classic translation factor GTPase family. LepA subfamily.

It is found in the cell inner membrane. The enzyme catalyses GTP + H2O = GDP + phosphate + H(+). Functionally, required for accurate and efficient protein synthesis under certain stress conditions. May act as a fidelity factor of the translation reaction, by catalyzing a one-codon backward translocation of tRNAs on improperly translocated ribosomes. Back-translocation proceeds from a post-translocation (POST) complex to a pre-translocation (PRE) complex, thus giving elongation factor G a second chance to translocate the tRNAs correctly. Binds to ribosomes in a GTP-dependent manner. This chain is Elongation factor 4, found in Synechococcus elongatus (strain ATCC 33912 / PCC 7942 / FACHB-805) (Anacystis nidulans R2).